The sequence spans 506 residues: Maturase K (506 aa).

It belongs to the intron maturase 2 family. MatK subfamily.

The protein resides in the plastid. It localises to the chloroplast. Usually encoded in the trnK tRNA gene intron. Probably assists in splicing its own and other chloroplast group II introns. The polypeptide is Maturase K (Arabis alpina (Alpine rock-cress)).